We begin with the raw amino-acid sequence, 537 residues long: CTP synthase (537 aa).

The segment at 1–268 (MSTKYIFVTG…DQIVCDHLKL (268 aa)) is amidoligase domain. Residue Ser-14 participates in CTP binding. A UTP-binding site is contributed by Ser-14. 15–20 (SIGKGI) contributes to the ATP binding site. Residue Tyr-55 coordinates L-glutamine. Asp-72 provides a ligand contact to ATP. The Mg(2+) site is built by Asp-72 and Glu-142. Residues 149–151 (DIE), 189–194 (KTKPTQ), and Lys-225 contribute to the CTP site. Residues 189–194 (KTKPTQ) and Lys-225 each bind UTP. The Glutamine amidotransferase type-1 domain occupies 293–536 (RIALVGKYVE…VTAAVEKSSD (244 aa)). Residue Gly-355 participates in L-glutamine binding. Cys-382 functions as the Nucleophile; for glutamine hydrolysis in the catalytic mechanism. Residues 383–386 (LGMQ), Glu-406, and Arg-464 each bind L-glutamine. Catalysis depends on residues His-509 and Glu-511.

It belongs to the CTP synthase family. In terms of assembly, homotetramer.

The enzyme catalyses UTP + L-glutamine + ATP + H2O = CTP + L-glutamate + ADP + phosphate + 2 H(+). It carries out the reaction L-glutamine + H2O = L-glutamate + NH4(+). It catalyses the reaction UTP + NH4(+) + ATP = CTP + ADP + phosphate + 2 H(+). The protein operates within pyrimidine metabolism; CTP biosynthesis via de novo pathway; CTP from UDP: step 2/2. Its activity is regulated as follows. Allosterically activated by GTP, when glutamine is the substrate; GTP has no effect on the reaction when ammonia is the substrate. The allosteric effector GTP functions by stabilizing the protein conformation that binds the tetrahedral intermediate(s) formed during glutamine hydrolysis. Inhibited by the product CTP, via allosteric rather than competitive inhibition. In terms of biological role, catalyzes the ATP-dependent amination of UTP to CTP with either L-glutamine or ammonia as the source of nitrogen. Regulates intracellular CTP levels through interactions with the four ribonucleotide triphosphates. This Streptococcus sanguinis (strain SK36) protein is CTP synthase.